A 400-amino-acid polypeptide reads, in one-letter code: Probable peptidoglycan D,D-transpeptidase PenA (400 aa).

Positions 1 to 21 (NIDGKGQEGLELSREDSLRGE) are disordered. The active-site Acyl-ester intermediate is S128.

The protein belongs to the transpeptidase family. FtsI subfamily.

The protein resides in the cell inner membrane. It carries out the reaction Preferential cleavage: (Ac)2-L-Lys-D-Ala-|-D-Ala. Also transpeptidation of peptidyl-alanyl moieties that are N-acyl substituents of D-alanine.. It functions in the pathway cell wall biogenesis; peptidoglycan biosynthesis. In terms of biological role, catalyzes cross-linking of the peptidoglycan cell wall at the division septum. This is Probable peptidoglycan D,D-transpeptidase PenA from Neisseria flavescens.